Here is a 227-residue protein sequence, read N- to C-terminus: D-lyxose/D-mannose isomerase (227 aa).

D-fructose-binding positions include lysine 90, 103 to 110, histidine 171, glutamate 186, and aspartate 193; that span reads HFHWRKRE. 4 residues coordinate Mn(2+): histidine 103, histidine 105, glutamate 110, and histidine 171.

This sequence belongs to the D-lyxose ketol-isomerase family. As to quaternary structure, homodimer; disulfide-linked. Dimerization is facilitated through a disulfide bond between the two monomers of the dimeric enzyme. The cofactor is Mn(2+).

The catalysed reaction is D-lyxose = D-xylulose. The enzyme catalyses D-mannose = D-fructose. Functionally, sugar isomerase that catalyzes the reversible isomerization of D-lyxose to D-xylulose, and D-mannose to D-fructose. Shows similar activity toward D-lyxose and D-mannose with a turnover and catalytic efficiency for D-lyxose as a substrate only 1.1- and 1.3-fold higher than those for D-mannose, respectively. Shows weaker activity with L-gulose, D-talose, L-ribose and L-allose. Overexpression enables cell growth on the rare pentose D-lyxose as the sole carbon source. The sequence is that of D-lyxose/D-mannose isomerase from Escherichia coli O157:H7.